The chain runs to 552 residues: Hyaluronan synthase 2 (552 aa).

Topologically, residues methionine 1–arginine 11 are cytoplasmic. Residues isoleucine 12–valine 32 traverse the membrane as a helical segment. At glycine 33 to serine 45 the chain is on the extracellular side. A helical transmembrane segment spans residues phenylalanine 46–leucine 66. At glutamate 67 to leucine 374 the chain is on the cytoplasmic side. Threonine 110 carries the post-translational modification Phosphothreonine. Residue lysine 190 forms a Glycyl lysine isopeptide (Lys-Gly) (interchain with G-Cter in ubiquitin) linkage. Serine 221 carries an O-linked (GlcNAc) serine glycan. Threonine 328 is modified (phosphothreonine). A helical transmembrane segment spans residues tryptophan 375–isoleucine 395. Residues glutamine 396–lysine 402 lie on the Extracellular side of the membrane. The chain crosses the membrane as a helical span at residues isoleucine 403–phenylalanine 423. Topologically, residues alanine 424–glycine 429 are cytoplasmic. Residues asparagine 430–alanine 450 traverse the membrane as a helical segment. Topologically, residues lysine 451 to phenylalanine 475 are extracellular. The helical transmembrane segment at isoleucine 476–isoleucine 496 threads the bilayer. At tyrosine 497–threonine 510 the chain is on the cytoplasmic side. The chain crosses the membrane as a helical span at residues valine 511 to valine 531. Topologically, residues valine 532–valine 552 are extracellular.

This sequence belongs to the NodC/HAS family. As to quaternary structure, homodimer; dimerization promotes enzymatic activity. Forms heterodimer with HAS3. Forms heterodimer with HAS1. The cofactor is Mg(2+). Phosphorylation at Thr-328 is essential for hyaluronan synthase activity. Post-translationally, O-GlcNAcylation at Ser-221 increases the stability of HAS2 and plasma membrane localization. In terms of processing, ubiquitination at Lys-190; this ubiquitination is essential for hyaluronan synthase activity and homo- or hetero-oligomerization. Can also be poly-ubiquitinated. Deubiquitinated by USP17L22/USP17 and USP4. USP17L22/USP17 efficiently removes 'Lys-63'- and 'Lys-48'-linked polyubiquitin chains, whereas USP4 preferentially removes monoubiquitination and, partially, both 'Lys-63'- and 'Lys-48'-linked polyubiquitin chain. As to expression, overexpressed in skin fibroblasts.

It localises to the cell membrane. The protein localises to the endoplasmic reticulum membrane. It is found in the vesicle. Its subcellular location is the golgi apparatus membrane. The protein resides in the lysosome. The enzyme catalyses [hyaluronan](n) + UDP-N-acetyl-alpha-D-glucosamine = N-acetyl-beta-D-glucosaminyl-(1-&gt;4)-[hyaluronan](n) + UDP + H(+). It carries out the reaction N-acetyl-beta-D-glucosaminyl-(1-&gt;4)-[hyaluronan](n) + UDP-alpha-D-glucuronate = [hyaluronan](n+1) + UDP + H(+). It participates in glycan biosynthesis; hyaluronan biosynthesis. In terms of biological role, catalyzes the addition of GlcNAc or GlcUA monosaccharides to the nascent hyaluronan polymer. Therefore, it is essential to hyaluronan synthesis a major component of most extracellular matrices that has a structural role in tissues architectures and regulates cell adhesion, migration and differentiation. This is one of three isoenzymes responsible for cellular hyaluronan synthesis and it is particularly responsible for the synthesis of high molecular mass hyaluronan. The sequence is that of Hyaluronan synthase 2 (Has2) from Heterocephalus glaber (Naked mole rat).